The following is a 186-amino-acid chain: Potassium-transporting ATPase KdpC subunit 1 (186 aa).

Residues 10–30 traverse the membrane as a helical segment; it reads LTIITMVLCGFLFPLAITLIG.

The protein belongs to the KdpC family. As to quaternary structure, the system is composed of three essential subunits: KdpA, KdpB and KdpC.

The protein localises to the cell membrane. Its function is as follows. Part of the high-affinity ATP-driven potassium transport (or Kdp) system, which catalyzes the hydrolysis of ATP coupled with the electrogenic transport of potassium into the cytoplasm. This subunit acts as a catalytic chaperone that increases the ATP-binding affinity of the ATP-hydrolyzing subunit KdpB by the formation of a transient KdpB/KdpC/ATP ternary complex. The sequence is that of Potassium-transporting ATPase KdpC subunit 1 from Staphylococcus aureus (strain Mu50 / ATCC 700699).